The following is a 426-amino-acid chain: Serine--tRNA ligase (426 aa).

233–235 (TAE) is a binding site for L-serine. 264-266 (RSE) contacts ATP. Residue glutamate 287 participates in L-serine binding. 351–354 (EISS) is an ATP binding site. Position 385 (serine 385) interacts with L-serine.

It belongs to the class-II aminoacyl-tRNA synthetase family. Type-1 seryl-tRNA synthetase subfamily. Homodimer. The tRNA molecule binds across the dimer.

The protein localises to the cytoplasm. The enzyme catalyses tRNA(Ser) + L-serine + ATP = L-seryl-tRNA(Ser) + AMP + diphosphate + H(+). The catalysed reaction is tRNA(Sec) + L-serine + ATP = L-seryl-tRNA(Sec) + AMP + diphosphate + H(+). Its pathway is aminoacyl-tRNA biosynthesis; selenocysteinyl-tRNA(Sec) biosynthesis; L-seryl-tRNA(Sec) from L-serine and tRNA(Sec): step 1/1. Functionally, catalyzes the attachment of serine to tRNA(Ser). Is also able to aminoacylate tRNA(Sec) with serine, to form the misacylated tRNA L-seryl-tRNA(Sec), which will be further converted into selenocysteinyl-tRNA(Sec). This Brachyspira hyodysenteriae (strain ATCC 49526 / WA1) protein is Serine--tRNA ligase.